Reading from the N-terminus, the 252-residue chain is MNLNKQVAIVTGGASGFGAAIARRLSQAGAAVLVADLNAEGAQRMATELNAAGGRALGMACDVSKEADYRAVVDAAIAQLGGLHIVVNNAGTTHRNKPALAVTEDEFDRVYRVNLKSVYWSAQCALPHFAQQGHGVMVNVASTTGVRPGPGLTWYSGSKAAMINLTKGLALEFARSGVRINAVNPMIGETPMMADFMGMEDTPANRERFLSRIPLGRFTRPDDVASAVAFLASDDASFLTGVCLDVDGGRNI.

NAD(+) contacts are provided by residues 9-36 and aspartate 62; that span reads IVTGGASGFGAAIARRLSQAGAAVLVAD. Residue serine 142 coordinates substrate. Tyrosine 155 (proton acceptor) is an active-site residue. NAD(+) is bound at residue lysine 159.

This sequence belongs to the short-chain dehydrogenases/reductases (SDR) family. Homodimer.

It carries out the reaction 4-formylbenzenesulfonate + NAD(+) + H2O = 4-sulfobenzoate + NADH + 2 H(+). Functionally, involved in the toluene-4-sulfonate degradation pathway. Does not discriminate between the sulfonate and the carboxyl substituents and can also be involved in the p-toluenecarboxylate degradation pathway. This Comamonas testosteroni (Pseudomonas testosteroni) protein is 4-formylbenzenesulfonate dehydrogenase TsaC1/TsaC2 (tsaC1).